Here is a 197-residue protein sequence, read N- to C-terminus: Penicillin-binding protein activator LpoB (197 aa).

Residues 1-17 (MIKRMSGIALAALLLSG) form the signal peptide. A lipid anchor (N-palmitoyl cysteine) is attached at Cys-18. Cys-18 carries the S-diacylglycerol cysteine lipid modification. The tract at residues 23 to 57 (PRGETPSQPPAPTTPAKPSVVPTPTPPVVTPVPQP) is disordered. Residues 29–57 (SQPPAPTTPAKPSVVPTPTPPVVTPVPQP) are compositionally biased toward pro residues.

The protein belongs to the LpoB family. Interacts with PBP1b.

The protein resides in the cell outer membrane. Its function is as follows. Regulator of peptidoglycan synthesis that is essential for the function of penicillin-binding protein 1B (PBP1b). The protein is Penicillin-binding protein activator LpoB of Edwardsiella piscicida.